Consider the following 398-residue polypeptide: Phosphoglycerate kinase (398 aa).

Substrate-binding positions include 21 to 23 (DFN), R36, 59 to 62 (HLGR), R119, and R157. ATP is bound by residues K208, G296, E327, and 354-357 (GGDS).

The protein belongs to the phosphoglycerate kinase family. As to quaternary structure, monomer.

It is found in the cytoplasm. It carries out the reaction (2R)-3-phosphoglycerate + ATP = (2R)-3-phospho-glyceroyl phosphate + ADP. Its pathway is carbohydrate degradation; glycolysis; pyruvate from D-glyceraldehyde 3-phosphate: step 2/5. This Streptococcus agalactiae serotype III (strain NEM316) protein is Phosphoglycerate kinase.